A 151-amino-acid polypeptide reads, in one-letter code: Guanylate kinase homolog (151 aa).

Residues 1–141 (MEREGVDYHY…AYSKLIQILQ (141 aa)) enclose the Guanylate kinase-like domain.

This sequence belongs to the guanylate kinase family.

In Bos taurus (Bovine), this protein is Guanylate kinase homolog.